The chain runs to 255 residues: 5'-nucleotidase SurE (255 aa).

Residues Asp8, Asp9, Ser40, and Asn93 each contribute to the a divalent metal cation site.

This sequence belongs to the SurE nucleotidase family. It depends on a divalent metal cation as a cofactor.

The protein localises to the cytoplasm. The catalysed reaction is a ribonucleoside 5'-phosphate + H2O = a ribonucleoside + phosphate. Nucleotidase that shows phosphatase activity on nucleoside 5'-monophosphates. The polypeptide is 5'-nucleotidase SurE (Nitrobacter hamburgensis (strain DSM 10229 / NCIMB 13809 / X14)).